A 352-amino-acid polypeptide reads, in one-letter code: MDTAKWPQEFVVKPMNEIVTNTCLKQQSNPPSPATPVERKARPEKDQALNCPRCNSLNTKFCYYNNYSLTQPRYFCKDCRRYWTAGGSLRNIPVGGGVRKNKRSSSNSSSSSPSSSSSSKKPLFANNNTPTPPLPHLNPKIGEAAATKVQDLTFSQGFGNAHEVKDLNLAFSQGFGIGHNHHSSIPEFLQVVPSSSMKNNPLVSTSSSLELLGISSSSASSNSRPAFMSYPNVHDSSVYTASGFGLSYPQFQEFMRPALGFSLDGGDPLRQEEGSSGTNNGRPLLPFESLLKLPVSSSSTNSGGNGNLKENNDEHSDHEHEKEEGEADQSVGFWSGMLSAGASAAASGGSWQ.

Positions 24 to 46 (LKQQSNPPSPATPVERKARPEKD) are disordered. Residues 37–46 (VERKARPEKD) are compositionally biased toward basic and acidic residues. The Dof-type zinc finger occupies 49–103 (LNCPRCNSLNTKFCYYNNYSLTQPRYFCKDCRRYWTAGGSLRNIPVGGGVRKNKR). Residues Cys51, Cys54, Cys76, and Cys79 each contribute to the Zn(2+) site. 2 disordered regions span residues 93 to 136 (PVGG…PLPH) and 265 to 334 (GGDP…VGFW). The span at 104-129 (SSSNSSSSSPSSSSSSKKPLFANNNT) shows a compositional bias: low complexity. The segment covering 310–323 (ENNDEHSDHEHEKE) has biased composition (basic and acidic residues).

It localises to the nucleus. In terms of biological role, transcription factor that binds specifically to a 5'-AA[AG]G-3' consensus core sequence. The sequence is that of Dof zinc finger protein DOF1.8 (DOF1.8) from Arabidopsis thaliana (Mouse-ear cress).